Here is a 98-residue protein sequence, read N- to C-terminus: N(2)-fixation sustaining protein CowN (98 aa).

The protein belongs to the CowN family.

Is required to sustain N(2)-dependent growth in the presence of low levels of carbon monoxide (CO). Probably acts by protecting the N(2) fixation ability of the nitrogenase complex, which is inactivated in the presence of CO. This chain is N(2)-fixation sustaining protein CowN, found in Azospirillum sp. (strain B510).